Reading from the N-terminus, the 252-residue chain is Phosphate import ATP-binding protein PstB 1 (252 aa).

Residues 6 to 247 enclose the ABC transporter domain; the sequence is LKVNDLSVYY…PQKQETEDYI (242 aa). 38 to 45 contacts ATP; it reads GPSGSGKS.

Belongs to the ABC transporter superfamily. Phosphate importer (TC 3.A.1.7) family. The complex is composed of two ATP-binding proteins (PstB), two transmembrane proteins (PstC and PstA) and a solute-binding protein (PstS).

The protein resides in the cell membrane. The catalysed reaction is phosphate(out) + ATP + H2O = ADP + 2 phosphate(in) + H(+). In terms of biological role, part of the ABC transporter complex PstSACB involved in phosphate import. Responsible for energy coupling to the transport system. This Streptococcus mutans serotype c (strain ATCC 700610 / UA159) protein is Phosphate import ATP-binding protein PstB 1.